Here is a 261-residue protein sequence, read N- to C-terminus: Probable septum site-determining protein MinC (261 aa).

This sequence belongs to the MinC family. In terms of assembly, interacts with MinD and FtsZ.

In terms of biological role, cell division inhibitor that blocks the formation of polar Z ring septums. Rapidly oscillates between the poles of the cell to destabilize FtsZ filaments that have formed before they mature into polar Z rings. Prevents FtsZ polymerization. This Burkholderia cenocepacia (strain ATCC BAA-245 / DSM 16553 / LMG 16656 / NCTC 13227 / J2315 / CF5610) (Burkholderia cepacia (strain J2315)) protein is Probable septum site-determining protein MinC.